We begin with the raw amino-acid sequence, 88 residues long: Large ribosomal subunit protein bL27 (88 aa).

The segment at 1–25 (MAHKKAGGSSRNGRDSPGQRRGIKR) is disordered.

Belongs to the bacterial ribosomal protein bL27 family.

The chain is Large ribosomal subunit protein bL27 (rpmA) from Lawsonia intracellularis.